The sequence spans 150 residues: uncharacterized protein (150 aa).

The first 22 residues, 1–22 (MVIALKRFSFLASIATLTVLNA), serve as a signal peptide directing secretion. C23 is lipidated: N-palmitoyl cysteine. A lipid anchor (S-diacylglycerol cysteine) is attached at C23.

It belongs to the MG067/MG068/MG395 family.

The protein localises to the cell membrane. This is an uncharacterized protein from Mycoplasma pneumoniae (strain ATCC 29342 / M129 / Subtype 1) (Mycoplasmoides pneumoniae).